Reading from the N-terminus, the 386-residue chain is 1-deoxy-D-xylulose 5-phosphate reductoisomerase (386 aa).

Positions 13, 14, 15, 16, 40, and 122 each coordinate NADPH. Lys-123 is a 1-deoxy-D-xylulose 5-phosphate binding site. Glu-124 lines the NADPH pocket. Asp-148 lines the Mn(2+) pocket. 1-deoxy-D-xylulose 5-phosphate is bound by residues Ser-149, Glu-150, Ser-177, and His-201. Glu-150 contributes to the Mn(2+) binding site. Residue Gly-207 coordinates NADPH. Positions 214, 219, 220, and 223 each coordinate 1-deoxy-D-xylulose 5-phosphate. Mn(2+) is bound at residue Glu-223.

It belongs to the DXR family. Requires Mg(2+) as cofactor. Mn(2+) is required as a cofactor.

It carries out the reaction 2-C-methyl-D-erythritol 4-phosphate + NADP(+) = 1-deoxy-D-xylulose 5-phosphate + NADPH + H(+). Its pathway is isoprenoid biosynthesis; isopentenyl diphosphate biosynthesis via DXP pathway; isopentenyl diphosphate from 1-deoxy-D-xylulose 5-phosphate: step 1/6. Catalyzes the NADPH-dependent rearrangement and reduction of 1-deoxy-D-xylulose-5-phosphate (DXP) to 2-C-methyl-D-erythritol 4-phosphate (MEP). This Francisella tularensis subsp. holarctica (strain OSU18) protein is 1-deoxy-D-xylulose 5-phosphate reductoisomerase.